The chain runs to 302 residues: Putative gluconeogenesis factor (302 aa).

This sequence belongs to the gluconeogenesis factor family.

Its subcellular location is the cytoplasm. In terms of biological role, required for morphogenesis under gluconeogenic growth conditions. The sequence is that of Putative gluconeogenesis factor (ybhK) from Salmonella typhimurium (strain LT2 / SGSC1412 / ATCC 700720).